A 92-amino-acid chain; its full sequence is N(2)-fixation sustaining protein CowN (92 aa).

This sequence belongs to the CowN family.

Its function is as follows. Is required to sustain N(2)-dependent growth in the presence of low levels of carbon monoxide (CO). Probably acts by protecting the N(2) fixation ability of the nitrogenase complex, which is inactivated in the presence of CO. This chain is N(2)-fixation sustaining protein CowN, found in Rhodopseudomonas palustris (strain BisA53).